The sequence spans 342 residues: Phosphoribosylformylglycinamidine cyclo-ligase (342 aa).

Belongs to the AIR synthase family.

It localises to the cytoplasm. It catalyses the reaction 2-formamido-N(1)-(5-O-phospho-beta-D-ribosyl)acetamidine + ATP = 5-amino-1-(5-phospho-beta-D-ribosyl)imidazole + ADP + phosphate + H(+). Its pathway is purine metabolism; IMP biosynthesis via de novo pathway; 5-amino-1-(5-phospho-D-ribosyl)imidazole from N(2)-formyl-N(1)-(5-phospho-D-ribosyl)glycinamide: step 2/2. In Staphylococcus aureus (strain MRSA252), this protein is Phosphoribosylformylglycinamidine cyclo-ligase.